The sequence spans 435 residues: Probable exopolygalacturonase B (435 aa).

The N-terminal stretch at 1–15 (MKFFLATLFASAVSS) is a signal peptide. N59, N184, and N224 each carry an N-linked (GlcNAc...) asparagine glycan. PbH1 repeat units follow at residues 208-239 (SKDV…DSLN), 240-261 (VDGL…SPKP), 262-283 (NTTN…SMGS), 294-315 (IEHA…RLKA), and 326-347 (INNI…VLDQ). The active-site Proton donor is the D254. C256 and C273 form a disulfide bridge. N-linked (GlcNAc...) asparagine glycans are attached at residues N262 and N274. The active site involves H277. N301, N328, N365, and N373 each carry an N-linked (GlcNAc...) asparagine glycan. The PbH1 6 repeat unit spans residues 366–388 (VTNILFENISGTSSGKNGKVVAD). An intrachain disulfide couples C391 to C397. An N-linked (GlcNAc...) asparagine glycan is attached at N406.

It belongs to the glycosyl hydrolase 28 family.

The protein resides in the secreted. It catalyses the reaction [(1-&gt;4)-alpha-D-galacturonosyl](n) + H2O = alpha-D-galacturonate + [(1-&gt;4)-alpha-D-galacturonosyl](n-1). Specific in hydrolyzing the terminal glycosidic bond of polygalacturonic acid and oligogalacturonates. In Aspergillus oryzae (strain ATCC 42149 / RIB 40) (Yellow koji mold), this protein is Probable exopolygalacturonase B (pgxB).